The sequence spans 505 residues: Photosystem II CP47 reaction center protein (505 aa).

Residues 1–19 lie on the Cytoplasmic side of the membrane; the sequence is GLPWYRVHTVLINDPGRLI. Chlorophyll a-binding residues include histidine 8, histidine 22, histidine 25, histidine 99, and histidine 113. Residues 20 to 35 form a helical membrane-spanning segment; that stretch reads AAHLMHTALVAGWAGS. Over 36–99 the chain is Lumenal; sequence MALYELATFD…WSFEGVALAH (64 aa). Residues 100 to 114 form a helical membrane-spanning segment; the sequence is IVLSGLLFLAACWHW. Over 115–138 the chain is Cytoplasmic; sequence VYWDLELFRDPRTGEPALDLPKMF. Residues 139 to 155 form a helical membrane-spanning segment; the sequence is GIHLFLAGLLCFGFGAF. Chlorophyll a contacts are provided by histidine 141, histidine 156, histidine 200, histidine 201, and histidine 215. Over 156–201 the chain is Lumenal; that stretch reads HLTGLFGPGMWVSDPYGLTGSVQPVAPEWGPDGFNPYNPGGVVAHH. The helical transmembrane segment at 202 to 217 threads the bilayer; it reads IAAGIVGIIAGLFHIL. Residues 218–235 are Cytoplasmic-facing; the sequence is VRPPQRLYKALRMGNIET. The helical transmembrane segment at 236 to 251 threads the bilayer; sequence VLSSSIAAVFFAAFVV. Over 252-455 the chain is Lumenal; that stretch reads AGTMWYGSAT…PRGWFTFAHA (204 aa). The chlorophyll a site is built by histidine 454, histidine 465, and histidine 468. A helical transmembrane segment spans residues 456 to 471; sequence VFALLFFFGHIWHGAR. Over 472–505 the chain is Cytoplasmic; sequence TLFRDVFSGIDPELSPEQVEWGFYQKVGDVTTRK.

Belongs to the PsbB/PsbC family. PsbB subfamily. PSII is composed of 1 copy each of membrane proteins PsbA, PsbB, PsbC, PsbD, PsbE, PsbF, PsbH, PsbI, PsbJ, PsbK, PsbL, PsbM, PsbT, PsbX, PsbY, PsbZ, Psb30/Ycf12, peripheral proteins PsbO, CyanoQ (PsbQ), PsbU, PsbV and a large number of cofactors. It forms dimeric complexes. Binds multiple chlorophylls. PSII binds additional chlorophylls, carotenoids and specific lipids. is required as a cofactor.

Its subcellular location is the cellular thylakoid membrane. Functionally, one of the components of the core complex of photosystem II (PSII). It binds chlorophyll and helps catalyze the primary light-induced photochemical processes of PSII. PSII is a light-driven water:plastoquinone oxidoreductase, using light energy to abstract electrons from H(2)O, generating O(2) and a proton gradient subsequently used for ATP formation. The protein is Photosystem II CP47 reaction center protein of Thermostichus vulcanus (Synechococcus vulcanus).